Consider the following 134-residue polypeptide: D-ribose pyranase (134 aa).

The active-site Proton donor is His20. Residues Asp28, His101, and 123 to 125 (YSN) contribute to the substrate site.

It belongs to the RbsD / FucU family. RbsD subfamily. As to quaternary structure, homodecamer.

It localises to the cytoplasm. It carries out the reaction beta-D-ribopyranose = beta-D-ribofuranose. Its pathway is carbohydrate metabolism; D-ribose degradation; D-ribose 5-phosphate from beta-D-ribopyranose: step 1/2. Its function is as follows. Catalyzes the interconversion of beta-pyran and beta-furan forms of D-ribose. The protein is D-ribose pyranase of Pseudomonas syringae pv. tomato (strain ATCC BAA-871 / DC3000).